A 192-amino-acid chain; its full sequence is uncharacterized protein (192 aa).

Residues 29–160 (HRQAAVLIPI…PLDIYRRGDS (132 aa)) form the Nudix hydrolase domain. Positions 67–89 (GAVDDTDASVIAAALREAEEEVA) match the Nudix box motif. The Mg(2+) site is built by glutamate 83 and glutamate 87.

It belongs to the Nudix hydrolase family. PCD1 subfamily. Mn(2+) serves as cofactor. It depends on Mg(2+) as a cofactor.

In terms of biological role, probably mediates the hydrolysis of some nucleoside diphosphate derivatives. This is an uncharacterized protein from Escherichia coli (strain SE11).